Reading from the N-terminus, the 276-residue chain is NH(3)-dependent NAD(+) synthetase (276 aa).

Residue 51 to 58 (GISGGVDS) coordinates ATP. Asp57 is a Mg(2+) binding site. Arg148 contributes to the deamido-NAD(+) binding site. Thr168 is a binding site for ATP. Mg(2+) is bound at residue Glu173. Lys181 and Asp188 together coordinate deamido-NAD(+). 2 residues coordinate ATP: Lys197 and Thr219. 268–269 (HK) contacts deamido-NAD(+).

Belongs to the NAD synthetase family. In terms of assembly, homodimer.

It catalyses the reaction deamido-NAD(+) + NH4(+) + ATP = AMP + diphosphate + NAD(+) + H(+). It functions in the pathway cofactor biosynthesis; NAD(+) biosynthesis; NAD(+) from deamido-NAD(+) (ammonia route): step 1/1. Catalyzes the ATP-dependent amidation of deamido-NAD to form NAD. Uses ammonia as a nitrogen source. This Streptomyces coelicolor (strain ATCC BAA-471 / A3(2) / M145) protein is NH(3)-dependent NAD(+) synthetase.